We begin with the raw amino-acid sequence, 500 residues long: Glycerol kinase (500 aa).

Threonine 14 serves as a coordination point for ADP. Residues threonine 14, threonine 15, and serine 16 each contribute to the ATP site. Residue threonine 14 coordinates sn-glycerol 3-phosphate. Arginine 18 provides a ligand contact to ADP. Sn-glycerol 3-phosphate-binding residues include arginine 84, glutamate 85, and tyrosine 136. Glycerol contacts are provided by arginine 84, glutamate 85, and tyrosine 136. At histidine 232 the chain carries Phosphohistidine; by HPr. Aspartate 246 is a binding site for sn-glycerol 3-phosphate. The glycerol site is built by aspartate 246 and glutamine 247. Residues threonine 268 and glycine 311 each contribute to the ADP site. ATP-binding residues include threonine 268, glycine 311, glutamine 315, and glycine 412. The ADP site is built by glycine 412 and asparagine 416.

This sequence belongs to the FGGY kinase family. Homotetramer and homodimer (in equilibrium). In terms of processing, the phosphoenolpyruvate-dependent sugar phosphotransferase system (PTS), including enzyme I, and histidine-containing protein (HPr) are required for the phosphorylation, which leads to the activation of the enzyme.

The enzyme catalyses glycerol + ATP = sn-glycerol 3-phosphate + ADP + H(+). Its pathway is polyol metabolism; glycerol degradation via glycerol kinase pathway; sn-glycerol 3-phosphate from glycerol: step 1/1. Its activity is regulated as follows. Activated by phosphorylation and inhibited by fructose 1,6-bisphosphate (FBP). Key enzyme in the regulation of glycerol uptake and metabolism. Catalyzes the phosphorylation of glycerol to yield sn-glycerol 3-phosphate. The polypeptide is Glycerol kinase (Limosilactobacillus reuteri (strain DSM 20016) (Lactobacillus reuteri)).